The sequence spans 142 residues: MKGKYLLGILVILGALGYMVFGGLGRNLVYFLTPSEYLQDQARYQNRPVRLGGLVKPGTVQYDKDRLELRFVLTDGVAEVPVFHKGTPPGMFKEGQGVVVEGRFQEGVFQGTNLLVKHSETYQPPKEGWTPEEVRKLIEEAQ.

The Cytoplasmic portion of the chain corresponds to 1 to 2; the sequence is MK. Residues 3-23 traverse the membrane as a helical; Signal-anchor for type II membrane protein segment; the sequence is GKYLLGILVILGALGYMVFGG. Topologically, residues 24-142 are periplasmic; that stretch reads LGRNLVYFLT…EVRKLIEEAQ (119 aa). Residues histidine 118 and tyrosine 122 each contribute to the heme site.

The protein belongs to the CcmE/CycJ family.

The protein localises to the cell inner membrane. Heme chaperone required for the biogenesis of c-type cytochromes. Transiently binds heme delivered by CcmC and transfers the heme to apo-cytochromes in a process facilitated by CcmF and CcmH. This chain is Cytochrome c-type biogenesis protein CcmE, found in Thermus thermophilus (strain ATCC 27634 / DSM 579 / HB8).